We begin with the raw amino-acid sequence, 620 residues long: Chaperone protein HscA homolog (620 aa).

It belongs to the heat shock protein 70 family.

In terms of biological role, chaperone involved in the maturation of iron-sulfur cluster-containing proteins. Has a low intrinsic ATPase activity which is markedly stimulated by HscB. The polypeptide is Chaperone protein HscA homolog (Colwellia psychrerythraea (strain 34H / ATCC BAA-681) (Vibrio psychroerythus)).